We begin with the raw amino-acid sequence, 591 residues long: Formate--tetrahydrofolate ligase (591 aa).

An ATP-binding site is contributed by 74–81; that stretch reads TPLGEGKS.

Belongs to the formate--tetrahydrofolate ligase family.

It carries out the reaction (6S)-5,6,7,8-tetrahydrofolate + formate + ATP = (6R)-10-formyltetrahydrofolate + ADP + phosphate. It participates in one-carbon metabolism; tetrahydrofolate interconversion. The polypeptide is Formate--tetrahydrofolate ligase (Desulforapulum autotrophicum (strain ATCC 43914 / DSM 3382 / VKM B-1955 / HRM2) (Desulfobacterium autotrophicum)).